The primary structure comprises 92 residues: UPF0250 protein Avin_08440 (92 aa).

It belongs to the UPF0250 family.

This is UPF0250 protein Avin_08440 from Azotobacter vinelandii (strain DJ / ATCC BAA-1303).